Reading from the N-terminus, the 335-residue chain is Type 1 fimbrin D-mannose specific adhesin (335 aa).

Residues Met-1–Ala-22 form the signal peptide.

The protein belongs to the fimbrial protein family.

Its subcellular location is the fimbrium. Its function is as follows. Involved in regulation of length and mediation of adhesion of type 1 fimbriae (but not necessary for the production of fimbriae). A mannose-binding adhesin. The sequence is that of Type 1 fimbrin D-mannose specific adhesin (fimH) from Salmonella typhimurium (strain LT2 / SGSC1412 / ATCC 700720).